The primary structure comprises 222 residues: Superoxide dismutase [Mn], mitochondrial (222 aa).

The transit peptide at 1–24 directs the protein to the mitochondrion; that stretch reads MLSRAVCGTGRQLAPALGYLGSRQ. H50 contributes to the Mn(2+) binding site. At Y58 the chain carries 3'-nitrotyrosine. K68 and K75 each carry N6-acetyllysine; alternate. Residues K68 and K75 each carry the N6-succinyllysine; alternate modification. H98 is a Mn(2+) binding site. The residue at position 114 (K114) is an N6-acetyllysine. An N6-acetyllysine; alternate mark is found at K122 and K130. 2 positions are modified to N6-succinyllysine; alternate: K122 and K130. Mn(2+) contacts are provided by D183 and H187. K202 carries the N6-acetyllysine modification.

The protein belongs to the iron/manganese superoxide dismutase family. Homotetramer. It depends on Mn(2+) as a cofactor. Post-translationally, nitrated under oxidative stress. Nitration coupled with oxidation inhibits the catalytic activity. Acetylation at Lys-122 decreases enzymatic activity. Deacetylated by SIRT3 upon exposure to ionizing radiations or after long fasting. In terms of processing, polyubiquitinated; leading to proteasomal degradation. Deubiquitinated by USP36 which increases protein stability.

It localises to the mitochondrion matrix. It catalyses the reaction 2 superoxide + 2 H(+) = H2O2 + O2. In terms of biological role, destroys superoxide anion radicals which are normally produced within the cells and which are toxic to biological systems. The polypeptide is Superoxide dismutase [Mn], mitochondrial (SOD2) (Macaca fascicularis (Crab-eating macaque)).